The following is a 1004-amino-acid chain: 2-oxoglutarate dehydrogenase E1 component (1004 aa).

Belongs to the alpha-ketoglutarate dehydrogenase family. Homodimer. Part of the 2-oxoglutarate dehydrogenase (OGDH) complex composed of E1 (2-oxoglutarate dehydrogenase), E2 (dihydrolipoamide succinyltransferase) and E3 (dihydrolipoamide dehydrogenase); the complex contains multiple copies of the three enzymatic components (E1, E2 and E3). Requires thiamine diphosphate as cofactor.

The catalysed reaction is N(6)-[(R)-lipoyl]-L-lysyl-[protein] + 2-oxoglutarate + H(+) = N(6)-[(R)-S(8)-succinyldihydrolipoyl]-L-lysyl-[protein] + CO2. Functionally, E1 component of the 2-oxoglutarate dehydrogenase (OGDH) complex which catalyzes the decarboxylation of 2-oxoglutarate, the first step in the conversion of 2-oxoglutarate to succinyl-CoA and CO(2). In Brucella ovis (strain ATCC 25840 / 63/290 / NCTC 10512), this protein is 2-oxoglutarate dehydrogenase E1 component.